Here is a 164-residue protein sequence, read N- to C-terminus: Sec-independent protein translocase protein TatB (164 aa).

A helical membrane pass occupies residues 1 to 21; it reads MIDIGLSKMALIGAVALIVIG. The segment at 81–102 is disordered; that stretch reads ASEFQKDWESGTSDAAATGHDG.

Belongs to the TatB family. In terms of assembly, the Tat system comprises two distinct complexes: a TatABC complex, containing multiple copies of TatA, TatB and TatC subunits, and a separate TatA complex, containing only TatA subunits. Substrates initially bind to the TatABC complex, which probably triggers association of the separate TatA complex to form the active translocon.

It is found in the cell inner membrane. Its function is as follows. Part of the twin-arginine translocation (Tat) system that transports large folded proteins containing a characteristic twin-arginine motif in their signal peptide across membranes. Together with TatC, TatB is part of a receptor directly interacting with Tat signal peptides. TatB may form an oligomeric binding site that transiently accommodates folded Tat precursor proteins before their translocation. This Paracidovorax citrulli (strain AAC00-1) (Acidovorax citrulli) protein is Sec-independent protein translocase protein TatB.